Consider the following 438-residue polypeptide: Methylenetetrahydrofolate--tRNA-(uracil-5-)-methyltransferase TrmFO (438 aa).

7–12 provides a ligand contact to FAD; that stretch reads GAGLAG.

The protein belongs to the MnmG family. TrmFO subfamily. The cofactor is FAD.

Its subcellular location is the cytoplasm. It carries out the reaction uridine(54) in tRNA + (6R)-5,10-methylene-5,6,7,8-tetrahydrofolate + NADH + H(+) = 5-methyluridine(54) in tRNA + (6S)-5,6,7,8-tetrahydrofolate + NAD(+). The catalysed reaction is uridine(54) in tRNA + (6R)-5,10-methylene-5,6,7,8-tetrahydrofolate + NADPH + H(+) = 5-methyluridine(54) in tRNA + (6S)-5,6,7,8-tetrahydrofolate + NADP(+). Catalyzes the folate-dependent formation of 5-methyl-uridine at position 54 (M-5-U54) in all tRNAs. This chain is Methylenetetrahydrofolate--tRNA-(uracil-5-)-methyltransferase TrmFO, found in Sulfurihydrogenibium sp. (strain YO3AOP1).